Here is a 174-residue protein sequence, read N- to C-terminus: Period clock protein (174 aa).

Residues Ser46–Thr134 form a disordered region. Repeat copies occupy residues Gly49–Thr50, Gly51–Ala52, Gly53–Thr54, Gly55–Thr56, Gly57–Thr58, Gly59–Thr60, Gly61–Thr62, Gly63–Thr64, Gly65–Thr66, Gly67–Thr68, Gly69–Thr70, Gly71–Thr72, Gly73–Thr74, Gly75–Thr76, Gly77–Thr78, Gly79–Thr80, Gly81–Thr82, Gly83–Thr84, Gly85–Thr86, Gly87–Thr88, Gly89–Thr90, Gly91–Thr92, Gly93–Thr94, Gly95–Thr96, Gly97–Thr98, Gly99–Thr100, Gly101–Thr102, Gly103–Thr104, Gly105–Thr106, Gly107–Thr108, Gly109–Thr110, Gly111–Thr112, Gly113–Thr114, Gly115–Thr116, Gly117–Thr118, Gly119–Thr120, Gly121–Thr122, Gly123–Thr124, Gly125–Thr126, Gly127–Thr128, Gly129–Thr130, Gly131–Thr132, Gly133–Thr134, Gly135–Thr136, and Gly137–Thr138. The interval Gly49 to Thr138 is 45 X 2 AA tandem repeats of G-[TA]. A compositionally biased stretch (gly residues) spans Thr50–Thr134.

The protein resides in the plastid. It localises to the chloroplast. In Acetabularia acetabulum (Mermaid's wine glass), this protein is Period clock protein.